The following is a 196-amino-acid chain: Dehydrogenase RED3 (196 aa).

Residues S47, D74, N101, R134, Y166, and K170 each contribute to the NADP(+) site. Catalysis depends on Y166, which acts as the Proton acceptor. Catalysis depends on K170, which acts as the Lowers pKa of active site Tyr.

This sequence belongs to the short-chain dehydrogenases/reductases (SDR) family.

The enzyme catalyses a primary alcohol + NAD(+) = an aldehyde + NADH + H(+). The catalysed reaction is a secondary alcohol + NAD(+) = a ketone + NADH + H(+). It participates in mycotoxin biosynthesis. Its function is as follows. Dehydrogenase; part of the Tox1B locus, one of the 2 loci that mediate the biosynthesis of T-toxin, a family of linear polyketides 37 to 45 carbons in length, of which the major component is 41 carbons, and which leads to high virulence to maize. One of the PKSs (PKS1 or PKS2) could synthesize a precursor, used subsequently by the other PKS as starter unit, to add additional carbons. Variability in the length of the final carbon backbone C35-47 could be achieved by varying the number of condensation cycles, or use of different starter or extender units or might be due to decarboxylation of the penultimate product, catalyzed by DEC1. Additional proteins are required for the biosynthesis of T-toxin, including oxidoreductases RED1, RED2, RED3, LAM1 and OXI1, as well as esterase TOX9. This is Dehydrogenase RED3 from Cochliobolus heterostrophus (strain C4 / ATCC 48331 / race T) (Southern corn leaf blight fungus).